The primary structure comprises 232 residues: Putative N-acetylmannosamine-6-phosphate 2-epimerase (232 aa).

It belongs to the NanE family.

It carries out the reaction an N-acyl-D-glucosamine 6-phosphate = an N-acyl-D-mannosamine 6-phosphate. Its pathway is amino-sugar metabolism; N-acetylneuraminate degradation; D-fructose 6-phosphate from N-acetylneuraminate: step 3/5. Its function is as follows. Converts N-acetylmannosamine-6-phosphate (ManNAc-6-P) to N-acetylglucosamine-6-phosphate (GlcNAc-6-P). In Borreliella afzelii (strain PKo) (Borrelia afzelii), this protein is Putative N-acetylmannosamine-6-phosphate 2-epimerase.